A 472-amino-acid chain; its full sequence is 3-isopropylmalate dehydratase large subunit (472 aa).

Cys353, Cys414, and Cys417 together coordinate [4Fe-4S] cluster.

Belongs to the aconitase/IPM isomerase family. LeuC type 1 subfamily. In terms of assembly, heterodimer of LeuC and LeuD. Requires [4Fe-4S] cluster as cofactor.

The enzyme catalyses (2R,3S)-3-isopropylmalate = (2S)-2-isopropylmalate. It functions in the pathway amino-acid biosynthesis; L-leucine biosynthesis; L-leucine from 3-methyl-2-oxobutanoate: step 2/4. In terms of biological role, catalyzes the isomerization between 2-isopropylmalate and 3-isopropylmalate, via the formation of 2-isopropylmaleate. The chain is 3-isopropylmalate dehydratase large subunit from Acinetobacter baumannii (strain AB0057).